The sequence spans 448 residues: Signal recognition particle protein (448 aa).

GTP-binding positions include 101–108, 182–186, and 240–243; these read GLQGSGKT, DSAGR, and SKFD.

This sequence belongs to the GTP-binding SRP family. SRP54 subfamily. As to quaternary structure, part of the signal recognition particle protein translocation system, which is composed of SRP and FtsY. SRP is a ribonucleoprotein composed of Ffh and a 4.5S RNA molecule.

The protein resides in the cytoplasm. It carries out the reaction GTP + H2O = GDP + phosphate + H(+). Its function is as follows. Involved in targeting and insertion of nascent membrane proteins into the cytoplasmic membrane. Binds to the hydrophobic signal sequence of the ribosome-nascent chain (RNC) as it emerges from the ribosomes. The SRP-RNC complex is then targeted to the cytoplasmic membrane where it interacts with the SRP receptor FtsY. Interaction with FtsY leads to the transfer of the RNC complex to the Sec translocase for insertion into the membrane, the hydrolysis of GTP by both Ffh and FtsY, and the dissociation of the SRP-FtsY complex into the individual components. The polypeptide is Signal recognition particle protein (Helicobacter pylori (strain ATCC 700392 / 26695) (Campylobacter pylori)).